The chain runs to 638 residues: Chaperone protein HtpG (638 aa).

The segment at 1-343 (MTSTIDSDGA…SADLPLNISR (343 aa)) is a; substrate-binding. Residues 344 to 557 (EMIQESPILA…ESGPDRQLEK (214 aa)) are b. Positions 558–638 (ILVGVGQLTG…VERGLRGSTA (81 aa)) are c.

This sequence belongs to the heat shock protein 90 family. In terms of assembly, homodimer.

Its subcellular location is the cytoplasm. Functionally, molecular chaperone. Has ATPase activity. The polypeptide is Chaperone protein HtpG (Nitrobacter hamburgensis (strain DSM 10229 / NCIMB 13809 / X14)).